The chain runs to 695 residues: Potassium voltage-gated channel subfamily KQT member 4 (695 aa).

The disordered stretch occupies residues 1–21; sequence MAEAPPRRLGLGPPPGDAPRA. Residues 1 to 96 are Cytoplasmic-facing; that stretch reads MAEAPPRRLG…VYNVLERPRG (96 aa). R93 contacts a 1,2-diacyl-sn-glycero-3-phospho-(1D-myo-inositol-4,5-bisphosphate). Residues 97 to 118 traverse the membrane as a helical segment; that stretch reads WAFVYHVFIFLLVFSCLVLSVL. Topologically, residues 119–129 are extracellular; sequence STIQEHQELAN. A helical transmembrane segment spans residues 130–152; that stretch reads ECLLILEFVMIVVFGLEYIVRVW. The Cytoplasmic segment spans residues 153–168; sequence SAGCCCRYRGWQGRFR. A helical transmembrane segment spans residues 169–191; sequence FARKPFCVIDFIVFVASVAVIAA. K172 lines the a 1,2-diacyl-sn-glycero-3-phospho-(1D-myo-inositol-4,5-bisphosphate) pocket. The Extracellular segment spans residues 192 to 202; that stretch reads GTQGNIFATSA. A helical; Voltage-sensor membrane pass occupies residues 203 to 223; sequence LRSMRFLQILRMVRMDRRGGT. A 1,2-diacyl-sn-glycero-3-phospho-(1D-myo-inositol-4,5-bisphosphate) is bound by residues R219, R220, K225, and S235. The Cytoplasmic segment spans residues 224–235; that stretch reads WKLLGSVVYAHS. The helical transmembrane segment at 236–258 threads the bilayer; the sequence is KELITAWYIGFLVLIFASFLVYL. Over 259–270 the chain is Extracellular; it reads AEKDANSDFSSY. An intramembrane region (pore-forming) is located at residues 271–292; the sequence is ADSLWWGTITLTTIGYGDKTPH. Position 293 (T293) is a topological domain, extracellular. Residues 294-322 form a helical membrane-spanning segment; that stretch reads WLGRVLAAGFALLGISFFALPAGILGSGF. Residues 323 to 695 are Cytoplasmic-facing; that stretch reads ALKVQEQHRQ…ISRSVSTNMD (373 aa). H330 and K333 together coordinate a 1,2-diacyl-sn-glycero-3-phospho-(1D-myo-inositol-4,5-bisphosphate). Residues 342–351 are interaction with CALM; sequence AANLIQAAWR. Disordered regions lie at residues 400–480 and 496–515; these read RRAP…TKVQ and RLKP…AEEK. Polar residues-rich tracts occupy residues 443 to 452 and 463 to 480; these read GSSQRRTGPS and TSPS…TKVQ. Positions 535–549 are interaction with CALM; sequence RSIRILKFLVAKRKF. Positions 546–650 are C-terminal assembly domain (tetramerization); the sequence is KRKFKETLRP…SRCLRSGTSA (105 aa). Positions 587–606 are disordered; that stretch reads VGRGPGDRKAREKGDKGPSD. Over residues 591–605 the composition is skewed to basic and acidic residues; it reads PGDRKAREKGDKGPS. Positions 615 to 636 form a coiled coil; it reads MMGRVVKVEKQVQSIEHKLDLL.

It belongs to the potassium channel family. KQT (TC 1.A.1.15) subfamily. Kv7.4/KCNQ4 sub-subfamily. In terms of assembly, homotetramer. Interacts (via C-terminus) with calmodulin; forms a heterooctameric structure (with 4:4 KCNQ1:CALM stoichiometry); the interaction is calcium-independent, constitutive, participates in the proper assembly of a functional channel. The interaction with calcium-free CALM controls channel trafficking whereas interaction with calcium-bound CALM regulates channel gating. May form a functional heteromultimeric channel with KCNQ3. Interacts with HSP90AB1; promotes cell surface expression of KCNQ4. As to expression, expressed in the outer, but not the inner, sensory hair cells of the cochlea. Slightly expressed in heart, brain and skeletal muscle.

The protein localises to the basal cell membrane. The catalysed reaction is K(+)(in) = K(+)(out). Two molecules of phosphatidylinositol-4,5-bisphosphate (PIP2-I and PIP2-II) are essential to activate KCNQ4 channel by inducing the coupling of the voltage-sensing domain (VSD) and the pore-forming domain (PD). Upon channel activation, PIP2-I and PIP2-II disrupt the VSD-calmodulin/CALM interaction, causing the release of CALM from the VSD which triggers the opening of the gate. Calcium suppresses KCNQ4 channel current through calcium-bound CALM C-terminus. Therefore CALM acts as calcium sensor that controls channel activity. ML213 potentiates KCNQ4 channel. KCNQ4 channel is blocked by linopirdin, XE991 and bepridil, whereas clofilium is without significant effect. Muscarinic agonist oxotremorine-M strongly suppress KCNQ4 current in CHO cells in which cloned KCNQ4 channels were coexpressed with M1 muscarinic receptors. Functionally, pore-forming subunit of the voltage-gated potassium (Kv) channel involved in the regulation of sensory cells excitability in the cochlea. KCNQ4/Kv7.4 channel is composed of 4 pore-forming subunits assembled as tetramers. Promotes the outflow of potassium ions in the repolarization phase of action potential which plays a role in regulating membrane potential of excitable cells. The channel conducts a slowly activating and deactivating current. Current often shows some inward rectification at positive potentials. Channel may be selectively permeable in vitro to other cations besides potassium, in decreasing order of affinity K(+) = Rb(+) &gt; Cs(+) &gt; Na(+). Important for normal physiological function of inner ear such as sensory perception of sound. The protein is Potassium voltage-gated channel subfamily KQT member 4 of Homo sapiens (Human).